The sequence spans 186 residues: ATP synthase subunit delta (186 aa).

Belongs to the ATPase delta chain family. As to quaternary structure, F-type ATPases have 2 components, F(1) - the catalytic core - and F(0) - the membrane proton channel. F(1) has five subunits: alpha(3), beta(3), gamma(1), delta(1), epsilon(1). F(0) has three main subunits: a(1), b(2) and c(10-14). The alpha and beta chains form an alternating ring which encloses part of the gamma chain. F(1) is attached to F(0) by a central stalk formed by the gamma and epsilon chains, while a peripheral stalk is formed by the delta and b chains.

The protein localises to the cell inner membrane. In terms of biological role, f(1)F(0) ATP synthase produces ATP from ADP in the presence of a proton or sodium gradient. F-type ATPases consist of two structural domains, F(1) containing the extramembraneous catalytic core and F(0) containing the membrane proton channel, linked together by a central stalk and a peripheral stalk. During catalysis, ATP synthesis in the catalytic domain of F(1) is coupled via a rotary mechanism of the central stalk subunits to proton translocation. Functionally, this protein is part of the stalk that links CF(0) to CF(1). It either transmits conformational changes from CF(0) to CF(1) or is implicated in proton conduction. This Bacteroides thetaiotaomicron (strain ATCC 29148 / DSM 2079 / JCM 5827 / CCUG 10774 / NCTC 10582 / VPI-5482 / E50) protein is ATP synthase subunit delta.